Here is a 92-residue protein sequence, read N- to C-terminus: Small cysteine and glycine repeat-containing protein 9 (92 aa).

The 11 X 2 AA repeats of CG stretch occupies residues 4-72 (CGCGSCGCSG…CCRRTCSSCG (69 aa)).

Belongs to the KRTAP type 28 family.

In terms of biological role, in the hair cortex, hair keratin intermediate filaments are embedded in an interfilamentous matrix, consisting of hair keratin-associated proteins (KRTAP), which are essential for the formation of a rigid and resistant hair shaft through their extensive disulfide bond cross-linking with abundant cysteine residues of hair keratins. The matrix proteins include the high-sulfur and high-glycine-tyrosine keratins. The protein is Small cysteine and glycine repeat-containing protein 9 of Homo sapiens (Human).